A 382-amino-acid polypeptide reads, in one-letter code: D-galactonate dehydratase (382 aa).

Residue aspartate 183 coordinates Mg(2+). The Proton donor role is filled by histidine 185. Mg(2+) contacts are provided by glutamate 209 and glutamate 235. Residue histidine 285 is the Proton acceptor of the active site.

The protein belongs to the mandelate racemase/muconate lactonizing enzyme family. GalD subfamily. Mg(2+) is required as a cofactor.

It carries out the reaction D-galactonate = 2-dehydro-3-deoxy-D-galactonate + H2O. It functions in the pathway carbohydrate acid metabolism; D-galactonate degradation; D-glyceraldehyde 3-phosphate and pyruvate from D-galactonate: step 1/3. Its function is as follows. Catalyzes the dehydration of D-galactonate to 2-keto-3-deoxy-D-galactonate. This is D-galactonate dehydratase from Salmonella paratyphi A (strain AKU_12601).